The following is a 349-amino-acid chain: Sensory histidine kinase/phosphatase NtrB (349 aa).

One can recognise a PAS domain in the interval 5–78 (TQPDAGQILN…SLEAGQGFTD (74 aa)). Positions 136–349 (GLAHEIKNPL…EFSVYLPIRK (214 aa)) constitute a Histidine kinase domain. Position 139 is a phosphohistidine; by autocatalysis (His-139). Residue Lys-329 participates in ATP binding.

In terms of processing, autophosphorylated.

It localises to the cytoplasm. The catalysed reaction is ATP + protein L-histidine = ADP + protein N-phospho-L-histidine.. Its function is as follows. Member of the two-component regulatory system NtrB/NtrC, which controls expression of the nitrogen-regulated (ntr) genes in response to nitrogen limitation. Under conditions of nitrogen limitation, NtrB autophosphorylates and transfers the phosphoryl group to NtrC. In the presence of nitrogen, acts as a phosphatase that dephosphorylates and inactivates NtrC. This Escherichia coli O157:H7 protein is Sensory histidine kinase/phosphatase NtrB (glnL).